We begin with the raw amino-acid sequence, 107 residues long: Thioredoxin (107 aa).

A Thioredoxin domain is found at 2 to 107; that stretch reads PSPIQVTDFS…TLTNALKKYL (106 aa). Catalysis depends on nucleophile residues Cys-32 and Cys-35. Cys-32 and Cys-35 are disulfide-bonded.

This sequence belongs to the thioredoxin family.

Its subcellular location is the plastid. It localises to the chloroplast. Its function is as follows. Participates in various redox reactions through the reversible oxidation of its active center dithiol to a disulfide and catalyzes dithiol-disulfide exchange reactions. The chain is Thioredoxin (trxA) from Cyanidium caldarium (Red alga).